Here is a 377-residue protein sequence, read N- to C-terminus: Nitric oxide reductase FlRd-NAD(+) reductase (377 aa).

The protein belongs to the FAD-dependent oxidoreductase family. The cofactor is FAD.

The protein resides in the cytoplasm. The catalysed reaction is 2 reduced [nitric oxide reductase rubredoxin domain] + NAD(+) + H(+) = 2 oxidized [nitric oxide reductase rubredoxin domain] + NADH. The protein operates within nitrogen metabolism; nitric oxide reduction. Its function is as follows. One of at least two accessory proteins for anaerobic nitric oxide (NO) reductase. Reduces the rubredoxin moiety of NO reductase. This chain is Nitric oxide reductase FlRd-NAD(+) reductase, found in Escherichia coli (strain SE11).